A 237-amino-acid polypeptide reads, in one-letter code: Orotidine 5'-phosphate decarboxylase (237 aa).

Residues aspartate 10, lysine 33, 60–69, threonine 124, arginine 186, glutamine 195, glycine 215, and arginine 216 contribute to the substrate site; that span reads DLKLHDIPNT. The active-site Proton donor is the lysine 62.

Belongs to the OMP decarboxylase family. Type 1 subfamily. As to quaternary structure, homodimer.

It catalyses the reaction orotidine 5'-phosphate + H(+) = UMP + CO2. The protein operates within pyrimidine metabolism; UMP biosynthesis via de novo pathway; UMP from orotate: step 2/2. Functionally, catalyzes the decarboxylation of orotidine 5'-monophosphate (OMP) to uridine 5'-monophosphate (UMP). In Lactiplantibacillus plantarum (strain ATCC BAA-793 / NCIMB 8826 / WCFS1) (Lactobacillus plantarum), this protein is Orotidine 5'-phosphate decarboxylase.